We begin with the raw amino-acid sequence, 347 residues long: Selenide, water dikinase (347 aa).

Cys16 is an active-site residue. ATP contacts are provided by residues Lys19 and 47 to 49 (TRD). Asp50 contributes to the Mg(2+) binding site. Residues Asp67, Asp90, and 138-140 (GHS) contribute to the ATP site. Asp90 is a binding site for Mg(2+). Asp226 is a binding site for Mg(2+).

Belongs to the selenophosphate synthase 1 family. Class I subfamily. Homodimer. Requires Mg(2+) as cofactor.

The catalysed reaction is hydrogenselenide + ATP + H2O = selenophosphate + AMP + phosphate + 2 H(+). Functionally, synthesizes selenophosphate from selenide and ATP. The protein is Selenide, water dikinase of Photorhabdus laumondii subsp. laumondii (strain DSM 15139 / CIP 105565 / TT01) (Photorhabdus luminescens subsp. laumondii).